The chain runs to 333 residues: Torsin-1A (333 aa).

An N-terminal signal peptide occupies residues 1-20; sequence MKLGRAALALLLLAPCVVRA. Residues 92-252 form an interaction with SNAPIN region; the sequence is KPKKPLTLSL…VSVFNNKNSG (161 aa). 103 to 110 is an ATP binding site; sequence GWTGTGKN. 2 N-linked (GlcNAc...) asparagine glycosylation sites follow: Asn-144 and Asn-159. The interaction with KLC1 stretch occupies residues 252 to 333; the sequence is GFWHSSLIDR…FTKLDYYLDD (82 aa). Positions 313–333 are interaction with SYNE3; the sequence is KVFSDKGCKTVFTKLDYYLDD.

The protein belongs to the ClpA/ClpB family. Torsin subfamily. In terms of assembly, homohexamer. Interacts with TOR1B; the interaction may be specific of neural tissues. Interacts (ATP-bound) with TOR1AIP1 and TOR1AIP2; the interactions induce ATPase activity. Interacts with KLHL14; preferentially when ATP-free. Interacts with KLC1 (via TPR repeats); the interaction associates TOR1A with the kinesin oligomeric complex. Interacts with COPS4; the interaction associates TOR1A with the CSN complex. Interacts with SNAPIN; the interaction is direct and associates SNAPIN with the CSN complex. Interacts with STON2. Interacts (ATP-bound) with SYNE3 (via KASH domain); the interaction is required for SYNE3 nuclear envelope localization. Interacts with VIM; the interaction associates TOR1A with the cytoskeleton. Interacts with PLEC. Interacts (ATP-bound) with SLC6A3; regulates SLC6A3 transport to the plasma membrane. N-glycosylated. In terms of tissue distribution, widely expressed (at protein level).

It is found in the endoplasmic reticulum lumen. Its subcellular location is the nucleus membrane. The protein resides in the cell projection. It localises to the growth cone. The protein localises to the cytoplasmic vesicle membrane. It is found in the synapse. Its subcellular location is the synaptosome. The protein resides in the cytoplasm. It localises to the cytoskeleton. The protein localises to the cytoplasmic vesicle. It is found in the secretory vesicle. Its subcellular location is the synaptic vesicle. The catalysed reaction is ATP + H2O = ADP + phosphate + H(+). Functionally, protein with chaperone functions important for the control of protein folding, processing, stability and localization as well as for the reduction of misfolded protein aggregates. Involved in the regulation of synaptic vesicle recycling, controls STON2 protein stability in collaboration with the COP9 signalosome complex (CSN). In the nucleus, may link the cytoskeleton with the nuclear envelope, this mechanism seems to be crucial for the control of nuclear polarity, cell movement and, specifically in neurons, nuclear envelope integrity. Participates in the cellular trafficking and may regulate the subcellular location of multipass membrane proteins such as the dopamine transporter SLC6A3, leading to the modulation of dopamine neurotransmission. In the endoplasmic reticulum, plays a role in the quality control of protein folding by increasing clearance of misfolded proteins such as SGCE variants or holding them in an intermediate state for proper refolding. May have a redundant function with TOR1B in non-neural tissues. The chain is Torsin-1A (Tor1a) from Mus musculus (Mouse).